A 329-amino-acid chain; its full sequence is Endochitinase A (329 aa).

The first 23 residues, 1-23 (MRLCKFTALSSLLFSLLLLSASA), serve as a signal peptide directing secretion. Residues 24 to 65 (EQCGSQAGGARCPSGLCCSKFGWCGNTNDYCGPGNCQSQCPG) enclose the Chitin-binding type-1 domain. Cystine bridges form between Cys26–Cys41, Cys35–Cys47, Cys40–Cys54, and Cys59–Cys63. Pro67 is modified (4-hydroxyproline; partial). Residues Pro69, Pro71, Pro72, and Pro74 each carry the 4-hydroxyproline modification. Pro75 is modified (4-hydroxyproline; partial). Disulfide bonds link Cys101–Cys163, Cys175–Cys183, and Cys282–Cys314. The active-site Proton donor is Glu145. A propeptide spans 323–329 (GLLVDTM) (removed in mature form).

The protein belongs to the glycosyl hydrolase 19 family. Chitinase class I subfamily. In terms of processing, the 4-hydroxyproline residues are not glycosylated in this plant vacuolar protein.

The protein localises to the vacuole. It catalyses the reaction Random endo-hydrolysis of N-acetyl-beta-D-glucosaminide (1-&gt;4)-beta-linkages in chitin and chitodextrins.. Functionally, defense against chitin-containing fungal pathogens. The chain is Endochitinase A (CHN48) from Nicotiana tabacum (Common tobacco).